A 246-amino-acid chain; its full sequence is Hydroxyacylglutathione hydrolase (246 aa).

Zn(2+) contacts are provided by His58, His60, Asp62, His63, His117, Asp137, and His175.

The protein belongs to the metallo-beta-lactamase superfamily. Glyoxalase II family. In terms of assembly, monomer. Zn(2+) is required as a cofactor.

It carries out the reaction an S-(2-hydroxyacyl)glutathione + H2O = a 2-hydroxy carboxylate + glutathione + H(+). It functions in the pathway secondary metabolite metabolism; methylglyoxal degradation; (R)-lactate from methylglyoxal: step 2/2. In terms of biological role, thiolesterase that catalyzes the hydrolysis of S-D-lactoyl-glutathione to form glutathione and D-lactic acid. This is Hydroxyacylglutathione hydrolase from Prochlorococcus marinus (strain MIT 9301).